The sequence spans 895 residues: MGDSGSRRCTLVSRLPIFRKSINRRHDSLPSSPSSSNTAGVHSSSPSSTNSSSGSTGKRRSIFRAPSISFHHKKGSEPKPEPTEQNLSISNGAQPSHSNMQKLSLEEHVKTRGRHSVGFSSSRSKKITRSLTEDFEREKEPSTNKNVFINCLSSGRSEGDDSGFTEEQSRRSIKQSTKKLLPKSFSSHYKFCKSVPQSQSTSLIQQPEFSLAIAQYQEQEAALGRPSPSCSVDVTERAGSSLQSPLLSADLTTAQTPSEFLALTEDSLSEADAFPKSGSTASHCDNFGHNDATSQPTSSLTAVSKTKMEFVGTAPCVMSPGRYRLEGRCSTELHSSPETPAGNRREVSLQSTELSVGNGSDPETHLPAHHQRGESPLAHAGEPALRTGSPRTLGSYDQHKALAERFKGVHPVSDSRVIPSSGDHVFNKTSYGYEASAAKVLASSLSPYREGRYIERRLRSSSEGTAGSSRMVLKPKDGHVEASSLRKHRTGSSSSKMNSLDVLNHLGSCELDEDDLMLDLEFLEEQNLQPPVCREDSCHSVMSCTAVLLSPVDPGKEVNMLEEPKCPEPSKQNLSLRITKDTDQEARCSHVSCMPNSPSADWPQQGVEENGGIDSLPFRLMLQECTAVKTLLLKMKRVLQESDVSPSSSTTSLPISPLTEEPLPFKDITRDECSMLRLQLKDRDELISQLQAELEKVQHLQKAFASRVDKSTQTELLGCDGLSLKRLEAVQGGRETTHRNRTMSQSHSTRDRKAIHTPTEDRFRYSTADQTSPYKNICQLPGLCLSNFLKDKELGGVMKHTRGNHEAVTSEMTQNSRTTMGQSFLKAAAKPEGLPMFSEKPKDPAALSRQHSTFTGRFGQPPRGPISLHTYSRKNVFLHHNLHTTEFQTLGQQDG.

Disordered stretches follow at residues 1–142 (MGDS…KEPS), 154–177 (SGRSEGDDSGFTEEQSRRSIKQST), 332–394 (ELHS…RTLG), and 459–497 (RSSSEGTAGSSRMVLKPKDGHVEASSLRKHRTGSSSSKM). Over residues 43–56 (SSSPSSTNSSSGST) the composition is skewed to low complexity. Over residues 83-102 (TEQNLSISNGAQPSHSNMQK) the composition is skewed to polar residues. Basic and acidic residues predominate over residues 131–142 (LTEDFEREKEPS). Residues 348-358 (SLQSTELSVGN) show a composition bias toward polar residues. Residues 675-705 (MLRLQLKDRDELISQLQAELEKVQHLQKAFA) adopt a coiled-coil conformation. Residues 731–753 (QGGRETTHRNRTMSQSHSTRDRK) form a disordered region.

The protein belongs to the CCSER family.

This is Serine-rich coiled-coil domain-containing protein 1 (Ccser1) from Mus musculus (Mouse).